Consider the following 64-residue polypeptide: Large ribosomal subunit protein bL35 (64 aa).

Belongs to the bacterial ribosomal protein bL35 family.

In Pseudomonas putida (strain W619), this protein is Large ribosomal subunit protein bL35.